Consider the following 222-residue polypeptide: Deoxyribose-phosphate aldolase (222 aa).

D93 acts as the Proton donor/acceptor in catalysis. The active-site Schiff-base intermediate with acetaldehyde is K156. K186 serves as the catalytic Proton donor/acceptor.

The protein belongs to the DeoC/FbaB aldolase family. DeoC type 1 subfamily.

Its subcellular location is the cytoplasm. It catalyses the reaction 2-deoxy-D-ribose 5-phosphate = D-glyceraldehyde 3-phosphate + acetaldehyde. It functions in the pathway carbohydrate degradation; 2-deoxy-D-ribose 1-phosphate degradation; D-glyceraldehyde 3-phosphate and acetaldehyde from 2-deoxy-alpha-D-ribose 1-phosphate: step 2/2. Functionally, catalyzes a reversible aldol reaction between acetaldehyde and D-glyceraldehyde 3-phosphate to generate 2-deoxy-D-ribose 5-phosphate. The protein is Deoxyribose-phosphate aldolase of Nocardia farcinica (strain IFM 10152).